The sequence spans 883 residues: Valine--tRNA ligase (883 aa).

Positions 50-60 match the 'HIGH' region motif; that stretch reads PNVTGKLHMGH. The 'KMSKS' region motif lies at 527–531; the sequence is KMSKS. Lysine 530 provides a ligand contact to ATP. Residues 811 to 883 are a coiled coil; it reads LNELIDLDEE…KQRLEQLQRA (73 aa). Positions 859–883 are disordered; the sequence is QRTKRSDFEDQLTSTKQRLEQLQRA.

Belongs to the class-I aminoacyl-tRNA synthetase family. ValS type 1 subfamily. As to quaternary structure, monomer.

It is found in the cytoplasm. The enzyme catalyses tRNA(Val) + L-valine + ATP = L-valyl-tRNA(Val) + AMP + diphosphate. Catalyzes the attachment of valine to tRNA(Val). As ValRS can inadvertently accommodate and process structurally similar amino acids such as threonine, to avoid such errors, it has a 'posttransfer' editing activity that hydrolyzes mischarged Thr-tRNA(Val) in a tRNA-dependent manner. This is Valine--tRNA ligase from Lacticaseibacillus casei (Lactobacillus casei).